Consider the following 156-residue polypeptide: SsrA-binding protein (156 aa).

Belongs to the SmpB family.

The protein resides in the cytoplasm. In terms of biological role, required for rescue of stalled ribosomes mediated by trans-translation. Binds to transfer-messenger RNA (tmRNA), required for stable association of tmRNA with ribosomes. tmRNA and SmpB together mimic tRNA shape, replacing the anticodon stem-loop with SmpB. tmRNA is encoded by the ssrA gene; the 2 termini fold to resemble tRNA(Ala) and it encodes a 'tag peptide', a short internal open reading frame. During trans-translation Ala-aminoacylated tmRNA acts like a tRNA, entering the A-site of stalled ribosomes, displacing the stalled mRNA. The ribosome then switches to translate the ORF on the tmRNA; the nascent peptide is terminated with the 'tag peptide' encoded by the tmRNA and targeted for degradation. The ribosome is freed to recommence translation, which seems to be the essential function of trans-translation. The sequence is that of SsrA-binding protein from Clostridium botulinum (strain Loch Maree / Type A3).